The sequence spans 299 residues: Zeta-sarcoglycan (299 aa).

Residues 1-37 (MTREQYILATQQNNLPRTENAQLYPVGIYGWRKRCLY) lie on the Cytoplasmic side of the membrane. Residues 38 to 58 (FFVLLLLVTMIVNLAMTIWIL) form a helical; Signal-anchor for type II membrane protein membrane-spanning segment. Residues 59-299 (KVMNFTVDGM…QSSSNICLWS (241 aa)) lie on the Extracellular side of the membrane. Asparagine 62 and asparagine 110 each carry an N-linked (GlcNAc...) asparagine glycan. Cysteine 273 and cysteine 289 are disulfide-bonded.

It belongs to the sarcoglycan beta/delta/gamma/zeta family.

It is found in the cell membrane. Its subcellular location is the sarcolemma. The protein localises to the cytoplasm. It localises to the cytoskeleton. Functionally, component of the sarcoglycan complex, a subcomplex of the dystrophin-glycoprotein complex which forms a link between the F-actin cytoskeleton and the extracellular matrix. May play a role in the maintenance of striated muscle membrane stability. In Homo sapiens (Human), this protein is Zeta-sarcoglycan (SGCZ).